The chain runs to 250 residues: 5-oxoprolinase subunit A (250 aa).

This sequence belongs to the LamB/PxpA family. As to quaternary structure, forms a complex composed of PxpA, PxpB and PxpC.

The catalysed reaction is 5-oxo-L-proline + ATP + 2 H2O = L-glutamate + ADP + phosphate + H(+). In terms of biological role, catalyzes the cleavage of 5-oxoproline to form L-glutamate coupled to the hydrolysis of ATP to ADP and inorganic phosphate. This chain is 5-oxoprolinase subunit A, found in Streptomyces griseus subsp. griseus (strain JCM 4626 / CBS 651.72 / NBRC 13350 / KCC S-0626 / ISP 5235).